A 163-amino-acid polypeptide reads, in one-letter code: Peptidyl-prolyl cis-trans isomerase-like 1 (163 aa).

A PPIase cyclophilin-type domain is found at 1 to 155 (MATDVAVETT…TEVKIVKARV (155 aa)).

It belongs to the cyclophilin-type PPIase family. PPIL1 subfamily.

It carries out the reaction [protein]-peptidylproline (omega=180) = [protein]-peptidylproline (omega=0). Its function is as follows. PPIases accelerate the folding of proteins. It catalyzes the cis-trans isomerization of proline imidic peptide bonds in oligopeptides. The chain is Peptidyl-prolyl cis-trans isomerase-like 1 (ppi-1) from Neurospora crassa (strain ATCC 24698 / 74-OR23-1A / CBS 708.71 / DSM 1257 / FGSC 987).